A 1179-amino-acid chain; its full sequence is DNA-directed RNA polymerase subunit beta' (1179 aa).

Cys-60, Cys-62, Cys-75, and Cys-78 together coordinate Zn(2+). Residues Asp-449, Asp-451, and Asp-453 each contribute to the Mg(2+) site. The Zn(2+) site is built by Cys-796, Cys-871, Cys-878, and Cys-881.

It belongs to the RNA polymerase beta' chain family. As to quaternary structure, the RNAP catalytic core consists of 2 alpha, 1 beta, 1 beta' and 1 omega subunit. When a sigma factor is associated with the core the holoenzyme is formed, which can initiate transcription. The cofactor is Mg(2+). Requires Zn(2+) as cofactor.

It catalyses the reaction RNA(n) + a ribonucleoside 5'-triphosphate = RNA(n+1) + diphosphate. Its function is as follows. DNA-dependent RNA polymerase catalyzes the transcription of DNA into RNA using the four ribonucleoside triphosphates as substrates. This Symbiobacterium thermophilum (strain DSM 24528 / JCM 14929 / IAM 14863 / T) protein is DNA-directed RNA polymerase subunit beta'.